The following is a 283-amino-acid chain: Elongation factor Ts (283 aa).

The tract at residues T80–V83 is involved in Mg(2+) ion dislocation from EF-Tu.

This sequence belongs to the EF-Ts family.

It localises to the cytoplasm. Its function is as follows. Associates with the EF-Tu.GDP complex and induces the exchange of GDP to GTP. It remains bound to the aminoacyl-tRNA.EF-Tu.GTP complex up to the GTP hydrolysis stage on the ribosome. The sequence is that of Elongation factor Ts from Salmonella agona (strain SL483).